A 532-amino-acid chain; its full sequence is uncharacterized protein (532 aa).

A run of 14 helical transmembrane segments spans residues Ile25 to Gly45, Ser65 to Thr85, Ala109 to Ala129, Leu134 to Ser154, Lys179 to Leu199, Ile203 to Glu223, Leu248 to Glu268, Val302 to Thr322, Lys344 to Ser364, Ser371 to Ile391, Ala392 to Gly412, Ala425 to Arg445, Ser459 to Gly479, and Ala494 to Val514.

This sequence belongs to the polysaccharide synthase family.

It localises to the cell membrane. This is an uncharacterized protein from Bacillus subtilis (strain 168).